A 98-amino-acid polypeptide reads, in one-letter code: Co-chaperonin GroES (98 aa).

This sequence belongs to the GroES chaperonin family. As to quaternary structure, heptamer of 7 subunits arranged in a ring. Interacts with the chaperonin GroEL.

It localises to the cytoplasm. Together with the chaperonin GroEL, plays an essential role in assisting protein folding. The GroEL-GroES system forms a nano-cage that allows encapsulation of the non-native substrate proteins and provides a physical environment optimized to promote and accelerate protein folding. GroES binds to the apical surface of the GroEL ring, thereby capping the opening of the GroEL channel. In Bartonella tribocorum (strain CIP 105476 / IBS 506), this protein is Co-chaperonin GroES.